The following is a 152-amino-acid chain: Superoxide dismutase [Cu-Zn] (152 aa).

Cu cation contacts are provided by H45, H47, and H62. A disulfide bridge connects residues C56 and C145. 4 residues coordinate Zn(2+): H62, H70, H79, and D82. A Cu cation-binding site is contributed by H119.

Belongs to the Cu-Zn superoxide dismutase family. In terms of assembly, homodimer. Requires Cu cation as cofactor. The cofactor is Zn(2+).

Its subcellular location is the cytoplasm. It catalyses the reaction 2 superoxide + 2 H(+) = H2O2 + O2. Destroys radicals which are normally produced within the cells and which are toxic to biological systems. The chain is Superoxide dismutase [Cu-Zn] (SODCC) from Capsicum annuum (Capsicum pepper).